The following is a 434-amino-acid chain: Glutamyl-tRNA reductase (434 aa).

Substrate-binding positions include 49-52 (TCNR), Ser-109, 114-116 (EPQ), and Gln-120. Cys-50 functions as the Nucleophile in the catalytic mechanism. NADP(+) is bound at residue 189-194 (GAGEMC).

Belongs to the glutamyl-tRNA reductase family. Homodimer.

The enzyme catalyses (S)-4-amino-5-oxopentanoate + tRNA(Glu) + NADP(+) = L-glutamyl-tRNA(Glu) + NADPH + H(+). Its pathway is porphyrin-containing compound metabolism; protoporphyrin-IX biosynthesis; 5-aminolevulinate from L-glutamyl-tRNA(Glu): step 1/2. Functionally, catalyzes the NADPH-dependent reduction of glutamyl-tRNA(Glu) to glutamate 1-semialdehyde (GSA). This Citrifermentans bemidjiense (strain ATCC BAA-1014 / DSM 16622 / JCM 12645 / Bem) (Geobacter bemidjiensis) protein is Glutamyl-tRNA reductase.